We begin with the raw amino-acid sequence, 197 residues long: Ribonuclease HII (197 aa).

Positions 9 to 197 (KLIAGVDEVG…APVKKALEQF (189 aa)) constitute an RNase H type-2 domain. D15, E16, and D107 together coordinate a divalent metal cation.

It belongs to the RNase HII family. Mn(2+) serves as cofactor. Requires Mg(2+) as cofactor.

It is found in the cytoplasm. It catalyses the reaction Endonucleolytic cleavage to 5'-phosphomonoester.. Functionally, endonuclease that specifically degrades the RNA of RNA-DNA hybrids. In Haemophilus influenzae (strain PittEE), this protein is Ribonuclease HII.